We begin with the raw amino-acid sequence, 273 residues long: 2,3,4,5-tetrahydropyridine-2,6-dicarboxylate N-succinyltransferase (273 aa).

Residues R104 and D141 each coordinate substrate.

Belongs to the transferase hexapeptide repeat family. Homotrimer.

The protein localises to the cytoplasm. The catalysed reaction is (S)-2,3,4,5-tetrahydrodipicolinate + succinyl-CoA + H2O = (S)-2-succinylamino-6-oxoheptanedioate + CoA. The protein operates within amino-acid biosynthesis; L-lysine biosynthesis via DAP pathway; LL-2,6-diaminopimelate from (S)-tetrahydrodipicolinate (succinylase route): step 1/3. In Neisseria gonorrhoeae (strain ATCC 700825 / FA 1090), this protein is 2,3,4,5-tetrahydropyridine-2,6-dicarboxylate N-succinyltransferase.